The chain runs to 326 residues: GTPase IMAP family member 5 (326 aa).

The Cytoplasmic segment spans residues 1-297 (MEDHGFEELS…MLCRVTSCLD (297 aa)). The AIG1-type G domain maps to 42-245 (SGLLRILLVG…HSNDLFVYTQ (204 aa)). GTP-binding positions include 51–59 (GKSGCGKSA), Ser72, 169–171 (HKE), and Asn206. Residues 298 to 318 (WHIAVSVLLIVLGLTLLITLI) form a helical; Anchor for type IV membrane protein membrane-spanning segment. The Lumenal portion of the chain corresponds to 319 to 326 (NMYIGRWK).

This sequence belongs to the TRAFAC class TrmE-Era-EngA-EngB-Septin-like GTPase superfamily. AIG1/Toc34/Toc159-like paraseptin GTPase family. IAN subfamily. As to quaternary structure, interacts with BAD, BAK1, BAX, BCL2, BCL2L1/Bcl-xL and BCL2L11/BimEL. The interaction with BAX is increased, when cells initiate apoptosis upon IL2 withdrawal. Forms a complex with BCL2L1 or MCL1 and HSPA8/HSC70; the interaction between HSPA8 and BCL2L1 or MCL1 is impaired in the absence of GIMAP5. May interact (via N-terminus) with microtubules. Primarily expressed in spleen, heart, lung and intestine and, at lower levels, in kidney, stomach and muscle. Expressed in thymus and lymph nodes (at protein level). In the spleen, expressed in periarteriolar lymphatic sheets. Isoform 2: Expressed at higher levels in T lymphocytes compared to isoform 1.

It is found in the lysosome membrane. The protein resides in the endosome. Its subcellular location is the multivesicular body membrane. The protein localises to the endosome membrane. Its function is as follows. Required for mitochondrial integrity and T-cell survival. May contribute to T-cell quiescence. Functionally, plays a role in T lymphocyte development and the optimal generation of CD4/CD8 double-positive thymocytes. Inhibitor of GSK3A, possibly by sequestering GSK3A in cytoplasmic vesicles and impairing its translocation to the nucleus. Consequently, impairs GSK3A-dependent transcriptional program and regulation of the DNA damage response occurring during T cells proliferation. Required for the survival of peripheral T cells, natural killer (NK) and NK T-cell development and the maintenance of normal liver function. Promotes the survival of quiescent T-cells. May regulate Ca(2+) homeostasis by modulating lysosomal Ca(2+) stores, preventing its accumulation in the absence of T cell activation. May play a role in mitochondrial DNA segregation in hematopoietic tissues. Is a regulator of liver endothelial cell homeostasis. The sequence is that of GTPase IMAP family member 5 (Gimap5) from Rattus norvegicus (Rat).